Reading from the N-terminus, the 426-residue chain is Serine--tRNA ligase (426 aa).

Position 227-229 (227-229 (TSE)) interacts with L-serine. ATP-binding positions include 258–260 (RKE) and V274. Residue E281 participates in L-serine binding. Residue 345-348 (ELTS) coordinates ATP. T380 serves as a coordination point for L-serine.

It belongs to the class-II aminoacyl-tRNA synthetase family. Type-1 seryl-tRNA synthetase subfamily. In terms of assembly, homodimer. The tRNA molecule binds across the dimer.

Its subcellular location is the cytoplasm. It catalyses the reaction tRNA(Ser) + L-serine + ATP = L-seryl-tRNA(Ser) + AMP + diphosphate + H(+). The enzyme catalyses tRNA(Sec) + L-serine + ATP = L-seryl-tRNA(Sec) + AMP + diphosphate + H(+). Its pathway is aminoacyl-tRNA biosynthesis; selenocysteinyl-tRNA(Sec) biosynthesis; L-seryl-tRNA(Sec) from L-serine and tRNA(Sec): step 1/1. Functionally, catalyzes the attachment of serine to tRNA(Ser). Is also able to aminoacylate tRNA(Sec) with serine, to form the misacylated tRNA L-seryl-tRNA(Sec), which will be further converted into selenocysteinyl-tRNA(Sec). The protein is Serine--tRNA ligase of Clavibacter michiganensis subsp. michiganensis (strain NCPPB 382).